A 389-amino-acid polypeptide reads, in one-letter code: Tryptophan synthase beta chain 1 (389 aa).

K84 is modified (N6-(pyridoxal phosphate)lysine).

Belongs to the TrpB family. As to quaternary structure, tetramer of two alpha and two beta chains. The cofactor is pyridoxal 5'-phosphate.

Its subcellular location is the plastid. The protein localises to the chloroplast. The catalysed reaction is (1S,2R)-1-C-(indol-3-yl)glycerol 3-phosphate + L-serine = D-glyceraldehyde 3-phosphate + L-tryptophan + H2O. It functions in the pathway amino-acid biosynthesis; L-tryptophan biosynthesis; L-tryptophan from chorismate: step 5/5. The beta subunit is responsible for the synthesis of L-tryptophan from indole and L-serine. This is Tryptophan synthase beta chain 1 (TSB1) from Zea mays (Maize).